Reading from the N-terminus, the 174-residue chain is CD164 sialomucin-like 2 protein (174 aa).

An N-terminal signal peptide occupies residues 1–29; that stretch reads MEAPGPRALRTALCGGCCCLLLCAQLAVA. Over 30–141 the chain is Extracellular; it reads GKGARGFGRG…AHSPGFDGAS (112 aa). 2 N-linked (GlcNAc...) asparagine glycosylation sites follow: N71 and N103. Residues 142–162 form a helical membrane-spanning segment; that stretch reads FIGGVVLVLSLQAVAFFVLHF. Residues 163–174 are Cytoplasmic-facing; the sequence is LKAKDSTYQTLI.

This sequence belongs to the CD164 family.

The protein localises to the membrane. The polypeptide is CD164 sialomucin-like 2 protein (CD164L2) (Homo sapiens (Human)).